A 701-amino-acid polypeptide reads, in one-letter code: Polyribonucleotide nucleotidyltransferase (701 aa).

Mg(2+) is bound by residues aspartate 487 and aspartate 493. A KH domain is found at 554 to 613; that stretch reads PTMIAMKIDTDKIRDVIGKGGATIRAICEETKASIDIEDDGSIKIFGESKEAAEAARQRV. One can recognise an S1 motif domain in the interval 623 to 691; sequence GKIYLGKVER…NRGRIKLSIK (69 aa).

It belongs to the polyribonucleotide nucleotidyltransferase family. Component of the RNA degradosome, which is a multiprotein complex involved in RNA processing and mRNA degradation. Requires Mg(2+) as cofactor.

The protein resides in the cytoplasm. It carries out the reaction RNA(n+1) + phosphate = RNA(n) + a ribonucleoside 5'-diphosphate. In terms of biological role, involved in mRNA degradation. Catalyzes the phosphorolysis of single-stranded polyribonucleotides processively in the 3'- to 5'-direction. In Pseudomonas syringae pv. tomato (strain ATCC BAA-871 / DC3000), this protein is Polyribonucleotide nucleotidyltransferase.